The following is a 27-amino-acid chain: IEPERQEEEEEETRQRVRRGQVRQQQQ.

The segment covering 1-12 (IEPERQEEEEEE) has biased composition (acidic residues). Residues 1-27 (IEPERQEEEEEETRQRVRRGQVRQQQQ) are disordered.

Metalloproteinase inhibitor, active on a globulinase from L.albus seeds, thermolysin and gelatinase B. In Lupinus albus (White lupine), this protein is Metalloproteinase inhibitor 1.